The chain runs to 233 residues: MTDYHIRIRELPATDKPRERLRASGAAALADAELLAILLRVGVEGVNAIQLAQQLLVEFGGWSGLQRAGFEELAQRRGMGEAKTAQLKAALEIGRRLLLASGEERFQIRSPTDAAQLMQIEMSHLDQEQLRAICLDTKNRVQKIQTVYVGSLNASMVRIGEVFKEAIRLNSASIIVVHNHPSGDPTPSPEDIVVTRQMIEAGRLLDIDVLDHLVIGNGRFVSMRERGLAFIKP.

One can recognise an MPN domain in the interval 107–229 (QIRSPTDAAQ…FVSMRERGLA (123 aa)). Positions 178, 180, and 191 each coordinate Zn(2+). Positions 178 to 191 (HNHPSGDPTPSPED) match the JAMM motif motif.

It belongs to the UPF0758 family.

The sequence is that of UPF0758 protein Rcas_0037 from Roseiflexus castenholzii (strain DSM 13941 / HLO8).